The following is a 1140-amino-acid chain: Probable DNA-directed RNA polymerase II subunit RPB2 homolog (1140 aa).

Mg(2+) is bound at residue D773. C1092, C1095, C1105, and C1108 together coordinate Zn(2+). The C4-type zinc-finger motif lies at C1092–C1108.

It belongs to the RNA polymerase beta chain family.

The enzyme catalyses RNA(n) + a ribonucleoside 5'-triphosphate = RNA(n+1) + diphosphate. Component of the DNA-dependent RNA polymerase that catalyzes the transcription of DNA into RNA using the four ribonucleoside triphosphates as substrates. Second largest component of RNA polymerase II which synthesizes mRNA precursors and many functional non-coding RNAs. Proposed to contribute to the polymerase catalytic activity and forms the polymerase active center together with the largest subunit. The protein is Probable DNA-directed RNA polymerase II subunit RPB2 homolog of Invertebrate iridescent virus 3 (IIV-3).